The primary structure comprises 239 residues: LexA repressor (239 aa).

Residues 26–46 (FDEMKEALDLASKSGIHRLIT) constitute a DNA-binding region (H-T-H motif). Residues 90-110 (GSLGKTPPPPARPAPVATNDD) are disordered. Residues serine 160 and lysine 198 each act as for autocatalytic cleavage activity in the active site.

This sequence belongs to the peptidase S24 family. As to quaternary structure, homodimer.

It carries out the reaction Hydrolysis of Ala-|-Gly bond in repressor LexA.. Functionally, represses a number of genes involved in the response to DNA damage (SOS response), including recA and lexA. In the presence of single-stranded DNA, RecA interacts with LexA causing an autocatalytic cleavage which disrupts the DNA-binding part of LexA, leading to derepression of the SOS regulon and eventually DNA repair. The polypeptide is LexA repressor (Brucella anthropi (strain ATCC 49188 / DSM 6882 / CCUG 24695 / JCM 21032 / LMG 3331 / NBRC 15819 / NCTC 12168 / Alc 37) (Ochrobactrum anthropi)).